We begin with the raw amino-acid sequence, 342 residues long: Aspartate carbamoyltransferase catalytic subunit (342 aa).

The carbamoyl phosphate site is built by R59 and T60. Position 87 (K87) interacts with L-aspartate. Carbamoyl phosphate contacts are provided by R109, H142, and Q145. The L-aspartate site is built by R182 and R253. 2 residues coordinate carbamoyl phosphate: G294 and P295.

This sequence belongs to the aspartate/ornithine carbamoyltransferase superfamily. ATCase family. Heterododecamer (2C3:3R2) of six catalytic PyrB chains organized as two trimers (C3), and six regulatory PyrI chains organized as three dimers (R2).

The enzyme catalyses carbamoyl phosphate + L-aspartate = N-carbamoyl-L-aspartate + phosphate + H(+). The protein operates within pyrimidine metabolism; UMP biosynthesis via de novo pathway; (S)-dihydroorotate from bicarbonate: step 2/3. Its function is as follows. Catalyzes the condensation of carbamoyl phosphate and aspartate to form carbamoyl aspartate and inorganic phosphate, the committed step in the de novo pyrimidine nucleotide biosynthesis pathway. The protein is Aspartate carbamoyltransferase catalytic subunit of Synechococcus sp. (strain WH7803).